The chain runs to 207 residues: Ribonuclease HII (207 aa).

Positions 18 to 206 constitute an RNase H type-2 domain; the sequence is EFIVGVDEVG…VKNILQLLEK (189 aa). Residues Asp24, Glu25, and Asp115 each contribute to the a divalent metal cation site.

It belongs to the RNase HII family. Mn(2+) serves as cofactor. The cofactor is Mg(2+).

It localises to the cytoplasm. It carries out the reaction Endonucleolytic cleavage to 5'-phosphomonoester.. Its function is as follows. Endonuclease that specifically degrades the RNA of RNA-DNA hybrids. This Hydrogenovibrio crunogenus (strain DSM 25203 / XCL-2) (Thiomicrospira crunogena) protein is Ribonuclease HII.